Here is a 109-residue protein sequence, read N- to C-terminus: Flagellar hook-basal body complex protein FliE (109 aa).

The protein belongs to the FliE family.

The protein localises to the bacterial flagellum basal body. The chain is Flagellar hook-basal body complex protein FliE from Stutzerimonas stutzeri (strain A1501) (Pseudomonas stutzeri).